A 173-amino-acid chain; its full sequence is Crossover junction endodeoxyribonuclease RuvC (173 aa).

Residues Asp8, Glu67, and Asp139 contribute to the active site. Positions 8, 67, and 139 each coordinate Mg(2+).

This sequence belongs to the RuvC family. In terms of assembly, homodimer which binds Holliday junction (HJ) DNA. The HJ becomes 2-fold symmetrical on binding to RuvC with unstacked arms; it has a different conformation from HJ DNA in complex with RuvA. In the full resolvosome a probable DNA-RuvA(4)-RuvB(12)-RuvC(2) complex forms which resolves the HJ. Mg(2+) is required as a cofactor.

Its subcellular location is the cytoplasm. The catalysed reaction is Endonucleolytic cleavage at a junction such as a reciprocal single-stranded crossover between two homologous DNA duplexes (Holliday junction).. The RuvA-RuvB-RuvC complex processes Holliday junction (HJ) DNA during genetic recombination and DNA repair. Endonuclease that resolves HJ intermediates. Cleaves cruciform DNA by making single-stranded nicks across the HJ at symmetrical positions within the homologous arms, yielding a 5'-phosphate and a 3'-hydroxyl group; requires a central core of homology in the junction. The consensus cleavage sequence is 5'-(A/T)TT(C/G)-3'. Cleavage occurs on the 3'-side of the TT dinucleotide at the point of strand exchange. HJ branch migration catalyzed by RuvA-RuvB allows RuvC to scan DNA until it finds its consensus sequence, where it cleaves and resolves the cruciform DNA. This Shewanella frigidimarina (strain NCIMB 400) protein is Crossover junction endodeoxyribonuclease RuvC.